A 574-amino-acid polypeptide reads, in one-letter code: MSNGLIILIIVIAVALILAYVAAVVLRKRNETLLDSLEERKEKLYNLPVNDEVEAIKNMHLIGQSQVTFREWNQKWVDLSLNSFADIENNIFEAEGYNNSFRFLKAKHAIDSIESQINLVEEDIELIREALADLEKQEAKNSGRVLHALELFENLQVKVAEDTEKYGPAVQEIQKQLQNIESEFSQFVTLNSSGDPVEAADILDKTENHILALTHIVDKVPSIVTELREVLPDQLEDLESGYRKLVEAGYHFVETDIESRFSQLHSNITQNYENIAALELDNAQYENTQIQEEINALYDIFTREIAAQKVVEKLQENLPAYLKHTKENNQHLQSELDRLSKMYLLSDEEDEKVRDLQSELSALEAVVLATVEDSAENKQAYSLTQEALEATQERLKEIEDEQITLGERLERIEKDDDNARQKVNIYINKLHTIKRYMEKRNLPGIPKSFLSLFFTASDHTEALLTELEQLRVNIDNVNLLLENVTNDIHDLETETYQIVQYATLTEQLLQYSNRYRSFDQSIQEAFNKALDIFENQFDYESSFEVISQALEVVEPGVTSRFVTSYEKTRENIRF.

The Extracellular portion of the chain corresponds to 1-7 (MSNGLII). The chain crosses the membrane as a helical span at residues 8-26 (LIIVIAVALILAYVAAVVL). Topologically, residues 27-574 (RKRNETLLDS…YEKTRENIRF (548 aa)) are cytoplasmic. 3 coiled-coil regions span residues 104 to 141 (LKAK…EAKN), 267 to 424 (NITQ…QKVN), and 456 to 524 (ASDH…SIQE).

The protein belongs to the EzrA family.

The protein resides in the cell membrane. Its function is as follows. Negative regulator of FtsZ ring formation; modulates the frequency and position of FtsZ ring formation. Inhibits FtsZ ring formation at polar sites. Interacts either with FtsZ or with one of its binding partners to promote depolymerization. In Streptococcus gordonii (strain Challis / ATCC 35105 / BCRC 15272 / CH1 / DL1 / V288), this protein is Septation ring formation regulator EzrA.